A 284-amino-acid chain; its full sequence is Tropomyosin (284 aa).

Positions 1-284 form a coiled coil; sequence MDGIKKKMIA…DQTFAELTGY (284 aa). 2 stretches are compositionally biased toward basic and acidic residues: residues 29–42 and 111–136; these read LKQKEEEQEKKETE and AKFDEASKTAEESERGRKELEIRSIA. 2 disordered regions span residues 29 to 49 and 111 to 149; these read LKQKEEEQEKKETEIGELNNR and AKFDEASKTAEESERGRKELEIRSIADDEGLSQLEDQQK.

The protein belongs to the tropomyosin family.

Functionally, tropomyosin, in association with the troponin complex, plays a central role in the calcium dependent regulation of muscle contraction. This chain is Tropomyosin, found in Clonorchis sinensis (Chinese liver fluke).